The following is a 203-amino-acid chain: DNA-directed RNA polymerase III subunit rpc8 (203 aa).

This sequence belongs to the eukaryotic RPB7/RPC8 RNA polymerase subunit family. Component of the RNA polymerase III (Pol III) complex consisting of 17 subunits. Rpc25/rpc8 and rpc17/rpc9 form a Pol III subcomplex.

It is found in the cytoplasm. Its subcellular location is the nucleus. Its function is as follows. DNA-dependent RNA polymerase catalyzes the transcription of DNA into RNA using the four ribonucleoside triphosphates as substrates. Specific peripheric component of RNA polymerase III which synthesizes small RNAs, such as 5S rRNA and tRNA. The sequence is that of DNA-directed RNA polymerase III subunit rpc8 (rpc25) from Schizosaccharomyces pombe (strain 972 / ATCC 24843) (Fission yeast).